Consider the following 400-residue polypeptide: Tryptophan synthase beta chain (400 aa).

Position 92 is an N6-(pyridoxal phosphate)lysine (Lys-92).

This sequence belongs to the TrpB family. In terms of assembly, tetramer of two alpha and two beta chains. Pyridoxal 5'-phosphate is required as a cofactor.

The catalysed reaction is (1S,2R)-1-C-(indol-3-yl)glycerol 3-phosphate + L-serine = D-glyceraldehyde 3-phosphate + L-tryptophan + H2O. It participates in amino-acid biosynthesis; L-tryptophan biosynthesis; L-tryptophan from chorismate: step 5/5. Functionally, the beta subunit is responsible for the synthesis of L-tryptophan from indole and L-serine. In Neisseria meningitidis serogroup B (strain ATCC BAA-335 / MC58), this protein is Tryptophan synthase beta chain.